The following is a 136-amino-acid chain: Histone H3 (136 aa).

The interval 1–43 (MARTKQTARKSTGGKAPRKQLASKAARKSAPSTGGVKKPHRYK) is disordered. Lys5 is modified (N6,N6,N6-trimethyllysine; alternate). Lys5 is modified (N6,N6-dimethyllysine; alternate). N6-methyllysine; alternate is present on residues Lys5 and Lys10. Lys10 carries the post-translational modification N6-acetyllysine; alternate. Position 11 is a phosphoserine (Ser11). At Lys15 the chain carries N6,N6-dimethyllysine; alternate. 5 positions are modified to N6-methyllysine; alternate: Lys15, Lys19, Lys24, Lys28, and Lys37. N6-acetyllysine; alternate occurs at positions 15, 19, 24, 28, and 37. Residues Lys28 and Lys37 each carry the N6,N6,N6-trimethyllysine; alternate modification. Lys28 and Lys37 each carry N6,N6-dimethyllysine; alternate. Residues Lys57 and Lys65 each carry the N6-acetyllysine modification. Residue Lys80 is modified to N6,N6,N6-trimethyllysine; alternate. Lys80 carries the post-translational modification N6,N6-dimethyllysine; alternate. Residue Lys80 is modified to N6-methyllysine; alternate.

This sequence belongs to the histone H3 family. In terms of assembly, the nucleosome is a histone octamer containing two molecules each of H2A, H2B, H3 and H4 assembled in one H3-H4 heterotetramer and two H2A-H2B heterodimers. The octamer wraps approximately 147 bp of DNA. Post-translationally, phosphorylated by IPL1 to form H3S10ph. H3S10ph promotes subsequent H3K14ac formation by GCN5 and is required for transcriptional activation through TBP recruitment to the promoters. In terms of processing, mono-, di- and trimethylated by the COMPASS complex to form H3K4me1/2/3. H3K4me activates gene expression by regulating transcription elongation and plays a role in telomere length maintenance. H3K4me enrichment correlates with transcription levels, and occurs in a 5' to 3' gradient with H3K4me3 enrichment at the 5'-end of genes, shifting to H3K4me2 and then H3K4me1. Methylated by SET2 to form H3K36me. H3K36me represses gene expression. Methylated by DOT1 to form H3K79me. H3K79me is required for association of SIR proteins with telomeric regions and for telomeric silencing. The COMPASS-mediated formation of H3K4me2/3 and the DOT1-mediated formation of H3K79me require H2BK123ub1. Acetylation of histone H3 leads to transcriptional activation. H3K14ac formation by GCN5 is promoted by H3S10ph. H3K14ac can also be formed by ESA1. H3K56ac formation occurs predominantly in newly synthesized H3 molecules during G1, S and G2/M of the cell cycle and may be involved in DNA repair.

It is found in the nucleus. Its subcellular location is the chromosome. Core component of nucleosome. Nucleosomes wrap and compact DNA into chromatin, limiting DNA accessibility to the cellular machineries which require DNA as a template. Histones thereby play a central role in transcription regulation, DNA repair, DNA replication and chromosomal stability. DNA accessibility is regulated via a complex set of post-translational modifications of histones, also called histone code, and nucleosome remodeling. The polypeptide is Histone H3 (HHT1) (Candida glabrata (strain ATCC 2001 / BCRC 20586 / JCM 3761 / NBRC 0622 / NRRL Y-65 / CBS 138) (Yeast)).